The sequence spans 158 residues: N5-carboxyaminoimidazole ribonucleotide mutase (158 aa).

3 residues coordinate substrate: S10, D13, and R40.

The protein belongs to the AIR carboxylase family. Class I subfamily.

It carries out the reaction 5-carboxyamino-1-(5-phospho-D-ribosyl)imidazole + H(+) = 5-amino-1-(5-phospho-D-ribosyl)imidazole-4-carboxylate. The protein operates within purine metabolism; IMP biosynthesis via de novo pathway; 5-amino-1-(5-phospho-D-ribosyl)imidazole-4-carboxylate from 5-amino-1-(5-phospho-D-ribosyl)imidazole (N5-CAIR route): step 2/2. Its function is as follows. Catalyzes the conversion of N5-carboxyaminoimidazole ribonucleotide (N5-CAIR) to 4-carboxy-5-aminoimidazole ribonucleotide (CAIR). The chain is N5-carboxyaminoimidazole ribonucleotide mutase from Saccharolobus solfataricus (strain ATCC 35092 / DSM 1617 / JCM 11322 / P2) (Sulfolobus solfataricus).